Consider the following 313-residue polypeptide: Ribonuclease HIII (313 aa).

The disordered stretch occupies residues 62–88; sequence AERWTADAETPAPKKPASKKSIPSVYQ. An RNase H type-2 domain is found at 96 to 312; that stretch reads MSVIGSDEVG…TQKAKRIASK (217 aa). A divalent metal cation is bound by residues aspartate 102, glutamate 103, and aspartate 207.

It belongs to the RNase HII family. RnhC subfamily. The cofactor is Mn(2+). It depends on Mg(2+) as a cofactor.

Its subcellular location is the cytoplasm. It carries out the reaction Endonucleolytic cleavage to 5'-phosphomonoester.. Endonuclease that specifically degrades the RNA of RNA-DNA hybrids. In Bacillus licheniformis (strain ATCC 14580 / DSM 13 / JCM 2505 / CCUG 7422 / NBRC 12200 / NCIMB 9375 / NCTC 10341 / NRRL NRS-1264 / Gibson 46), this protein is Ribonuclease HIII.